Reading from the N-terminus, the 484-residue chain is Acetyl-coenzyme A carboxylase carboxyl transferase subunit beta, chloroplastic (484 aa).

The CoA carboxyltransferase N-terminal domain occupies 223-484 (LWIQCDNCYG…LHAFFPLNKN (262 aa)). Residues Cys227, Cys230, Cys243, and Cys246 each coordinate Zn(2+). The segment at 227-246 (CDNCYGLMYKKVKINVCEQC) adopts a C4-type zinc-finger fold.

This sequence belongs to the AccD/PCCB family. Acetyl-CoA carboxylase is a heterohexamer composed of biotin carboxyl carrier protein, biotin carboxylase and 2 subunits each of ACCase subunit alpha and ACCase plastid-coded subunit beta (accD). Zn(2+) serves as cofactor.

Its subcellular location is the plastid. The protein localises to the chloroplast stroma. It catalyses the reaction N(6)-carboxybiotinyl-L-lysyl-[protein] + acetyl-CoA = N(6)-biotinyl-L-lysyl-[protein] + malonyl-CoA. The protein operates within lipid metabolism; malonyl-CoA biosynthesis; malonyl-CoA from acetyl-CoA: step 1/1. Its function is as follows. Component of the acetyl coenzyme A carboxylase (ACC) complex. Biotin carboxylase (BC) catalyzes the carboxylation of biotin on its carrier protein (BCCP) and then the CO(2) group is transferred by the transcarboxylase to acetyl-CoA to form malonyl-CoA. This chain is Acetyl-coenzyme A carboxylase carboxyl transferase subunit beta, chloroplastic, found in Capsella bursa-pastoris (Shepherd's purse).